A 205-amino-acid chain; its full sequence is Thiamine-phosphate synthase (205 aa).

4-amino-2-methyl-5-(diphosphooxymethyl)pyrimidine-binding positions include 36–40 and Asp68; that span reads QYRRK. Mg(2+) is bound by residues Asp69 and Asp88. Ser106 contributes to the 4-amino-2-methyl-5-(diphosphooxymethyl)pyrimidine binding site. 2-[(2R,5Z)-2-carboxy-4-methylthiazol-5(2H)-ylidene]ethyl phosphate is bound at residue 132 to 134; the sequence is SPT. Lys135 contacts 4-amino-2-methyl-5-(diphosphooxymethyl)pyrimidine. 2-[(2R,5Z)-2-carboxy-4-methylthiazol-5(2H)-ylidene]ethyl phosphate is bound by residues Gly162 and 182-183; that span reads IS.

The protein belongs to the thiamine-phosphate synthase family. Mg(2+) is required as a cofactor.

It catalyses the reaction 2-[(2R,5Z)-2-carboxy-4-methylthiazol-5(2H)-ylidene]ethyl phosphate + 4-amino-2-methyl-5-(diphosphooxymethyl)pyrimidine + 2 H(+) = thiamine phosphate + CO2 + diphosphate. It carries out the reaction 2-(2-carboxy-4-methylthiazol-5-yl)ethyl phosphate + 4-amino-2-methyl-5-(diphosphooxymethyl)pyrimidine + 2 H(+) = thiamine phosphate + CO2 + diphosphate. The enzyme catalyses 4-methyl-5-(2-phosphooxyethyl)-thiazole + 4-amino-2-methyl-5-(diphosphooxymethyl)pyrimidine + H(+) = thiamine phosphate + diphosphate. It participates in cofactor biosynthesis; thiamine diphosphate biosynthesis; thiamine phosphate from 4-amino-2-methyl-5-diphosphomethylpyrimidine and 4-methyl-5-(2-phosphoethyl)-thiazole: step 1/1. Its function is as follows. Condenses 4-methyl-5-(beta-hydroxyethyl)thiazole monophosphate (THZ-P) and 2-methyl-4-amino-5-hydroxymethyl pyrimidine pyrophosphate (HMP-PP) to form thiamine monophosphate (TMP). In Caldivirga maquilingensis (strain ATCC 700844 / DSM 13496 / JCM 10307 / IC-167), this protein is Thiamine-phosphate synthase.